The sequence spans 477 residues: tRNA-2-methylthio-N(6)-dimethylallyladenosine synthase (477 aa).

Residues 3-120 enclose the MTTase N-terminal domain; the sequence is KKLYIKTWGC…LPEMINELKG (118 aa). [4Fe-4S] cluster contacts are provided by Cys-12, Cys-49, Cys-83, Cys-157, Cys-161, and Cys-164. Positions 143–375 constitute a Radical SAM core domain; it reads RAEGPTAFVS…QQRITQQALR (233 aa). The TRAM domain occupies 378–441; it reads RHMVGTEQRI…TNSLRGEVVR (64 aa).

Belongs to the methylthiotransferase family. MiaB subfamily. As to quaternary structure, monomer. The cofactor is [4Fe-4S] cluster.

It localises to the cytoplasm. It catalyses the reaction N(6)-dimethylallyladenosine(37) in tRNA + (sulfur carrier)-SH + AH2 + 2 S-adenosyl-L-methionine = 2-methylsulfanyl-N(6)-dimethylallyladenosine(37) in tRNA + (sulfur carrier)-H + 5'-deoxyadenosine + L-methionine + A + S-adenosyl-L-homocysteine + 2 H(+). In terms of biological role, catalyzes the methylthiolation of N6-(dimethylallyl)adenosine (i(6)A), leading to the formation of 2-methylthio-N6-(dimethylallyl)adenosine (ms(2)i(6)A) at position 37 in tRNAs that read codons beginning with uridine. This Alteromonas mediterranea (strain DSM 17117 / CIP 110805 / LMG 28347 / Deep ecotype) protein is tRNA-2-methylthio-N(6)-dimethylallyladenosine synthase.